A 158-amino-acid polypeptide reads, in one-letter code: Vasotocin-neurophysin VT 2 (158 aa).

The signal sequence occupies residues 1 to 19; the sequence is MPHSTLLLCVIGLLAFSSA. The cysteines at positions 20 and 25 are disulfide-linked. Gly28 carries the glycine amide modification. Intrachain disulfides connect Cys41–Cys85, Cys44–Cys58, Cys52–Cys75, Cys59–Cys65, Cys92–Cys105, Cys99–Cys117, and Cys106–Cys111.

It belongs to the vasopressin/oxytocin family. In terms of processing, seven disulfide bonds are present in neurophysin.

It localises to the secreted. In terms of biological role, vasotocin is an antidiuretic hormone. This is Vasotocin-neurophysin VT 2 from Oncorhynchus keta (Chum salmon).